We begin with the raw amino-acid sequence, 684 residues long: Agnestins biosynthesis cluster transcription factor AgnL11 (684 aa).

The zn(2)-C6 fungal-type DNA-binding region spans 25 to 51; that stretch reads CHFCRTKKLKCDRRFPCSNCRARRLSC. Residues 76 to 103 are a coiled coil; that stretch reads NEELSENINELKARLQRLEELISVNAEE. The disordered stretch occupies residues 601-644; that stretch reads KGSASARKDKNPIHGDTDRATPPGSSNLPQHDKSSSSSPAPPVW. The segment covering 606–619 has biased composition (basic and acidic residues); that stretch reads ARKDKNPIHGDTDR.

The protein localises to the nucleus. Its function is as follows. Transcription factor that regulates the expression of the gene cluster that mediates the biosynthesis of agnestins, dihydroxy-xanthone metabolites. This is Agnestins biosynthesis cluster transcription factor AgnL11 from Paecilomyces divaricatus (Penicillium divaricatum).